The primary structure comprises 309 residues: Homoserine kinase (309 aa).

91-101 is an ATP binding site; that stretch reads PIGSGLGSSAC.

Belongs to the GHMP kinase family. Homoserine kinase subfamily.

The protein localises to the cytoplasm. The enzyme catalyses L-homoserine + ATP = O-phospho-L-homoserine + ADP + H(+). The protein operates within amino-acid biosynthesis; L-threonine biosynthesis; L-threonine from L-aspartate: step 4/5. Functionally, catalyzes the ATP-dependent phosphorylation of L-homoserine to L-homoserine phosphate. The chain is Homoserine kinase from Serratia proteamaculans (strain 568).